We begin with the raw amino-acid sequence, 420 residues long: Serine hydroxymethyltransferase (420 aa).

(6S)-5,6,7,8-tetrahydrofolate-binding positions include leucine 121 and 125–127 (GHL). Lysine 230 is modified (N6-(pyridoxal phosphate)lysine). (6S)-5,6,7,8-tetrahydrofolate is bound by residues glutamate 246 and 354-356 (SPF).

Belongs to the SHMT family. In terms of assembly, homodimer. Pyridoxal 5'-phosphate is required as a cofactor.

It is found in the cytoplasm. The enzyme catalyses (6R)-5,10-methylene-5,6,7,8-tetrahydrofolate + glycine + H2O = (6S)-5,6,7,8-tetrahydrofolate + L-serine. Its pathway is one-carbon metabolism; tetrahydrofolate interconversion. The protein operates within amino-acid biosynthesis; glycine biosynthesis; glycine from L-serine: step 1/1. Its function is as follows. Catalyzes the reversible interconversion of serine and glycine with tetrahydrofolate (THF) serving as the one-carbon carrier. This reaction serves as the major source of one-carbon groups required for the biosynthesis of purines, thymidylate, methionine, and other important biomolecules. Also exhibits THF-independent aldolase activity toward beta-hydroxyamino acids, producing glycine and aldehydes, via a retro-aldol mechanism. The sequence is that of Serine hydroxymethyltransferase from Rickettsia rickettsii (strain Iowa).